Consider the following 389-residue polypeptide: Acetylornithine aminotransferase (389 aa).

Residues 96–97 (GT) and Phe123 each bind pyridoxal 5'-phosphate. Arg126 contacts N(2)-acetyl-L-ornithine. 207 to 210 (DEVQ) is a pyridoxal 5'-phosphate binding site. An N6-(pyridoxal phosphate)lysine modification is found at Lys236. Position 264 (Ser264) interacts with N(2)-acetyl-L-ornithine. Thr265 is a pyridoxal 5'-phosphate binding site.

It belongs to the class-III pyridoxal-phosphate-dependent aminotransferase family. ArgD subfamily. Homodimer. Requires pyridoxal 5'-phosphate as cofactor.

Its subcellular location is the cytoplasm. It carries out the reaction N(2)-acetyl-L-ornithine + 2-oxoglutarate = N-acetyl-L-glutamate 5-semialdehyde + L-glutamate. It participates in amino-acid biosynthesis; L-arginine biosynthesis; N(2)-acetyl-L-ornithine from L-glutamate: step 4/4. The polypeptide is Acetylornithine aminotransferase (Lactiplantibacillus plantarum (strain ATCC BAA-793 / NCIMB 8826 / WCFS1) (Lactobacillus plantarum)).